Consider the following 399-residue polypeptide: Actin-related protein 2 (399 aa).

Residues Gly-165–Gly-167, Arg-219–Glu-223, and Gly-310–Tyr-315 contribute to the ATP site.

It belongs to the actin family. ARP2 subfamily. Component of the Arp2/3 complex.

Its subcellular location is the cytoplasm. The protein resides in the cytoskeleton. In terms of biological role, functions as ATP-binding component of the Arp2/3 complex which is involved in regulation of actin polymerization and together with an activating nucleation-promoting factor (NPF) mediates the formation of branched actin networks. Seems to contact the pointed end of the daughter actin filament. In Drosophila melanogaster (Fruit fly), this protein is Actin-related protein 2 (Arp2).